The sequence spans 445 residues: Histidinol dehydrogenase (445 aa).

Residues Y138, Q199, and N222 each contribute to the NAD(+) site. 3 residues coordinate substrate: S245, Q267, and H270. Q267 and H270 together coordinate Zn(2+). Catalysis depends on proton acceptor residues E335 and H336. Substrate is bound by residues H336, D369, E423, and H428. D369 is a binding site for Zn(2+). Zn(2+) is bound at residue H428.

It belongs to the histidinol dehydrogenase family. Zn(2+) serves as cofactor.

It catalyses the reaction L-histidinol + 2 NAD(+) + H2O = L-histidine + 2 NADH + 3 H(+). It functions in the pathway amino-acid biosynthesis; L-histidine biosynthesis; L-histidine from 5-phospho-alpha-D-ribose 1-diphosphate: step 9/9. In terms of biological role, catalyzes the sequential NAD-dependent oxidations of L-histidinol to L-histidinaldehyde and then to L-histidine. The sequence is that of Histidinol dehydrogenase from Burkholderia mallei (strain ATCC 23344).